Reading from the N-terminus, the 447-residue chain is Argininosuccinate synthase (447 aa).

ATP-binding positions include 17–25 (AFSGGLDTS) and alanine 43. An L-citrulline-binding site is contributed by tyrosine 99. ATP-binding residues include glycine 129 and threonine 131. Threonine 131, asparagine 135, and aspartate 136 together coordinate L-aspartate. Asparagine 135 is a binding site for L-citrulline. Aspartate 136 provides a ligand contact to ATP. Residues arginine 139 and serine 192 each contribute to the L-citrulline site. Aspartate 194 is an ATP binding site. Residues threonine 201, glutamate 203, and glutamate 280 each contribute to the L-citrulline site.

It belongs to the argininosuccinate synthase family. Type 2 subfamily. As to quaternary structure, homotetramer.

Its subcellular location is the cytoplasm. It catalyses the reaction L-citrulline + L-aspartate + ATP = 2-(N(omega)-L-arginino)succinate + AMP + diphosphate + H(+). The protein operates within amino-acid biosynthesis; L-arginine biosynthesis; L-arginine from L-ornithine and carbamoyl phosphate: step 2/3. In Salmonella heidelberg (strain SL476), this protein is Argininosuccinate synthase.